We begin with the raw amino-acid sequence, 157 residues long: Parasitophorous vacuole membrane protein S16 (157 aa).

Positions 1 to 25 (MNIRKFIPSLALMLIFFAFANLVLS) are cleaved as a signal peptide. At 26 to 105 (DANDKAKKPA…DKKTTVNRNL (80 aa)) the chain is on the extracellular side. Positions 30–74 (KAKKPAGKGSPSTLQTPGSSSGASLHAVGPNQGGLSQGLSGKDSA) are disordered. The span at 39 to 52 (SPSTLQTPGSSSGA) shows a compositional bias: polar residues. Residues 106–126 (IISTAVTNMIMLIILSGIVGF) form a helical membrane-spanning segment. At 127–157 (KVKKTKNADDDKGDKDKDKDNTDEGDEGDDS) the chain is on the cytoplasmic side. Residues 130-157 (KTKNADDDKGDKDKDKDNTDEGDEGDDS) are disordered. Basic and acidic residues predominate over residues 132–148 (KNADDDKGDKDKDKDNT).

It localises to the parasitophorous vacuole membrane. Its subcellular location is the vacuole. Functionally, involved in male gametogenesis. Required for exflagellation of male gametocytes. May play a role in parasite transmission in the mosquito. Binds to the mosquito vector midgut. This is Parasitophorous vacuole membrane protein S16 from Plasmodium falciparum (isolate 3D7).